The following is a 490-amino-acid chain: Sec sixty-one protein homolog (490 aa).

At 1 to 32 the chain is on the cytoplasmic side; that stretch reads MSGFRLIDIVKPILPILPEVELPFEKLPFDDK. A helical transmembrane segment spans residues 33–53; that stretch reads IVYTIFAGLIYLFAQFPLVGL. The Lumenal portion of the chain corresponds to 54–121; it reads PKATTPNVND…DRELFQSLTK (68 aa). Residues 122 to 142 traverse the membrane as a helical segment; sequence VFAIVQYVILTNIFIFAGYFG. Residues 143–146 are Cytoplasmic-facing; it reads DDLS. The helical transmembrane segment at 147-167 threads the bilayer; sequence VVQIGLINFQLVGAGIFTTLL. Over 168–174 the chain is Lumenal; it reads AEVIDKG. A helical transmembrane segment spans residues 175–195; it reads FGFSSGAMIINTVVIATNLVA. Residues 196 to 242 lie on the Cytoplasmic side of the membrane; sequence DTFGVSQIKVGEDDQTEAQGALINLIQGLRSKHKTFIGGIISAFNRD. The helical transmembrane segment at 243–263 threads the bilayer; the sequence is YLPNLTTTIIVLAIAIIVCYL. Topologically, residues 264–293 are lumenal; it reads QSVRVELPIRSTRARGTNNVYPIKLLYTGC. Residues 294–314 traverse the membrane as a helical segment; that stretch reads LSVLFSYTILFYIHIFAFVLI. The Cytoplasmic segment spans residues 315-339; sequence QLVAKNEPTHIICKIMGHYENANNL. A helical membrane pass occupies residues 340-360; the sequence is LAVPTFPLSLLAPPTSFFKGV. Position 361 (Thr361) is a topological domain, lumenal. A helical transmembrane segment spans residues 362–382; the sequence is QQPLTFITYSAFILVTGIWFA. Topologically, residues 383 to 421 are cytoplasmic; it reads DKWQAISGSSARDVALEFKDQGITLMGRREQNVAKELNK. Residues 422 to 442 form a helical membrane-spanning segment; the sequence is VIPIAAVTGASVLSLITVIGE. The Lumenal segment spans residues 443–449; it reads SLGLKGK. A helical membrane pass occupies residues 450 to 470; the sequence is AAGIVVGIAGGFSLLEVITIE. Residues 471-490 are Cytoplasmic-facing; sequence YQQSGGQSALNQVLGVPGAM.

It belongs to the SecY/SEC61-alpha family. As to quaternary structure, component of the heterotrimeric Ssh1 complex, which is composed of SSH1, SBH2 and SSS1.

The protein localises to the endoplasmic reticulum membrane. Functionally, part of the Ssh1 complex, which probably is the major component of a channel-forming translocon complex that may function exclusively in the cotranslational pathway of protein endoplasmic reticulum (ER) import. The protein is Sec sixty-one protein homolog (SSH1) of Saccharomyces cerevisiae (strain ATCC 204508 / S288c) (Baker's yeast).